Here is a 349-residue protein sequence, read N- to C-terminus: Protein RecA (349 aa).

An ATP-binding site is contributed by 64-71 (GPESSGKT).

This sequence belongs to the RecA family.

The protein resides in the cytoplasm. Functionally, can catalyze the hydrolysis of ATP in the presence of single-stranded DNA, the ATP-dependent uptake of single-stranded DNA by duplex DNA, and the ATP-dependent hybridization of homologous single-stranded DNAs. It interacts with LexA causing its activation and leading to its autocatalytic cleavage. The chain is Protein RecA from Rhodopseudomonas palustris (strain ATCC BAA-98 / CGA009).